The following is a 130-amino-acid chain: Methylglyoxal synthase (130 aa).

The region spanning Met1–Ala130 is the MGS-like domain. Residues His11, Lys15, Thr37 to Thr40, and Ser57 to Gly58 each bind substrate. Residue Asp63 is the Proton donor/acceptor of the active site. His90 lines the substrate pocket.

It belongs to the methylglyoxal synthase family.

The enzyme catalyses dihydroxyacetone phosphate = methylglyoxal + phosphate. Catalyzes the formation of methylglyoxal from dihydroxyacetone phosphate. This chain is Methylglyoxal synthase, found in Burkholderia mallei (strain NCTC 10247).